Consider the following 761-residue polypeptide: MASERGKVKHNWSSTSEGCPRKRSCLREPCDVAPSSRPAQRSASRSGGPSSPKRLKAQKEDDVACSRRLSWGSSRRRNNSSSSFSPHFLGPGVGGAASKGCLIRNTRGFLSSGGSPLRPANASLEEMASLEEEACSLKVDSKDSSHNSTNSEFAAEAEGQNDTIEEPNKVQKRKRDRLRDQGSTMIYLKAIQGILGKSMPKRKGEAATRAKPSAAEHPSHGEGPARSEGPAKTAEGAARSVTVTAAQKEKDATPEVSMEEDKTVPERSSFYDRRVVIDPQEKPSEEPLGDRRTVIDKCSPPLEFLDDSDSHLEIQKHKDREVVMEHPSSGSDWSDVEEISTVRFSQEEPVSLKPSAVPEPSSFTTDYVMYPPHLYSSPWCDYASYWTSSPKPSSYPSTGSSSNDAAQVGKSSRSRMSDYSPNSTGSVQNTSRDMEASEEGWSQNSRSFRFSRSSEEREVKEKRTFQEEMPPRPCGGHASSSLPKSHLEPSLEEGFIDTHCHLDMLYSKLSFQGTFTKFRKIYSSSFPKEFQGCISDFCDPRTLTDCLWEELLKEDLVWGAFGCHPHFARYYSESQERNLLQALRHPKAVAFGEMGLDYSYKCTTPVPEQHKVFERQLQLAVSLKKPLVIHCREADEDLLEIMKKFVPPDYKIHRHCFTGSYPVIEPLLKYFPNMSVGFTAVLTYSSAWEAREALRQIPLERIIVETDAPYFLPRQVPKSLCQYAHPGLALHTVREIARVKDQPLSLTLAALRENTSRLYSL.

Disordered stretches follow at residues 1–90 (MASE…HFLG), 135–181 (CSLK…LRDQ), 197–294 (KSMP…RRTV), 318–337 (KDRE…SDVE), 343–364 (RFSQ…SSFT), and 388–486 (SSPK…PKSH). Composition is skewed to low complexity over residues 33–52 (APSS…PSSP) and 66–85 (SRRL…SSFS). Residues 247-294 (QKEKDATPEVSMEEDKTVPERSSFYDRRVVIDPQEKPSEEPLGDRRTV) are compositionally biased toward basic and acidic residues. Residues 388–402 (SSPKPSSYPSTGSSS) are compositionally biased toward low complexity. Residues 417-431 (SDYSPNSTGSVQNTS) are compositionally biased toward polar residues. Residues 452 to 470 (RSSEEREVKEKRTFQEEMP) are compositionally biased toward basic and acidic residues. The a divalent metal cation site is built by H499, H501, E593, H630, H655, and D707.

The protein belongs to the metallo-dependent hydrolases superfamily. TatD-type hydrolase family. Mg(2+) serves as cofactor.

It localises to the nucleus. Mg(2+)-dependent 3'RNA exonuclease and endonuclease that resolves R-loops via specific degradation of R-loop RNA stucture. Shows no activity against D-loop and minimal activity against the RNA strand of an RNA-DNA hybrid duplex oligomer. Has no 3' or 5' exonuclease activity, no uracil glycosylase activity, and no 5' flap endonuclease activity on DNA substrates. May have a role in maintaining genomic stability through its role in R-loop resolution. This chain is 3'-5' RNA nuclease TATDN2 (TATDN2), found in Homo sapiens (Human).